The chain runs to 234 residues: LexA repressor (234 aa).

A DNA-binding region (H-T-H motif) is located at residues 41–61 (RAEIAAELGFRSPNAAEEHLK). Residues serine 152 and lysine 189 each act as for autocatalytic cleavage activity in the active site.

Belongs to the peptidase S24 family. Homodimer.

The enzyme catalyses Hydrolysis of Ala-|-Gly bond in repressor LexA.. Functionally, represses a number of genes involved in the response to DNA damage (SOS response), including recA and lexA. In the presence of single-stranded DNA, RecA interacts with LexA causing an autocatalytic cleavage which disrupts the DNA-binding part of LexA, leading to derepression of the SOS regulon and eventually DNA repair. The sequence is that of LexA repressor from Polaromonas naphthalenivorans (strain CJ2).